The following is a 419-amino-acid chain: Dynein regulatory complex protein 9 (419 aa).

2 disordered regions span residues 25 to 45 (TGEP…EETS) and 394 to 419 (NFKM…RRKK). Positions 30-45 (EAAEEDLDYEEEEETS) are enriched in acidic residues. The IQ domain occupies 372–401 (ELRSIVKLQAWWRGSVVRKEIGNFKMPKKD). Basic and acidic residues predominate over residues 394–413 (NFKMPKKDKDDSKDSKGKEK).

The protein belongs to the DRC9 family. As to quaternary structure, component of the nexin-dynein regulatory complex (N-DRC). Interacts (via IQ domain) with CALM when calcium levels are low. Does not interact with CALM in the presence of Ca(2+). Interacts with the HSP70 proteins HSPA1L and HSPA8. May form a complex with CAMK4 and HSP70. In terms of tissue distribution, expressed in the testes (at protein level). Also detected in oviduct (at protein level). Also detected in the trachea.

The protein resides in the cytoplasm. Its subcellular location is the cell projection. The protein localises to the cilium. It localises to the flagellum. It is found in the cytoskeleton. The protein resides in the flagellum axoneme. Its function is as follows. Component of the nexin-dynein regulatory complex (N-DRC), a key regulator of ciliary/flagellar motility which maintains the alignment and integrity of the distal axoneme and regulates microtubule sliding in motile axonemes. Binds calmodulin when cellular Ca(2+) levels are low and thereby contributes to the regulation of calcium and calmodulin-dependent protein kinase IV (CAMK4) activity; contributes to the regulation of CAMK4 signaling cascades. Required for normal axoneme assembly in sperm flagella, normal sperm tail formation and for male fertility. The sequence is that of Dynein regulatory complex protein 9 (Iqcg) from Mus musculus (Mouse).